The sequence spans 205 residues: Large ribosomal subunit protein uL18 (205 aa).

Belongs to the universal ribosomal protein uL18 family. In terms of assembly, part of the 50S ribosomal subunit. Contacts the 5S and 23S rRNAs.

Functionally, this is one of the proteins that bind and probably mediate the attachment of the 5S RNA into the large ribosomal subunit, where it forms part of the central protuberance. This Haloquadratum walsbyi (strain DSM 16790 / HBSQ001) protein is Large ribosomal subunit protein uL18.